Here is a 325-residue protein sequence, read N- to C-terminus: Small ribosomal subunit protein uS4m (325 aa).

Residues 146–209 form the S4 RNA-binding domain; sequence KRIDMILLRS…HKQNLIHRLK (64 aa).

Belongs to the universal ribosomal protein uS4 family.

It is found in the mitochondrion. This chain is Small ribosomal subunit protein uS4m (mrps4), found in Dictyostelium citrinum (Slime mold).